Reading from the N-terminus, the 460-residue chain is Cysteine--tRNA ligase (460 aa).

Cys28 provides a ligand contact to Zn(2+). The 'HIGH' region signature appears at 30 to 40 (MTVYDYCHLGH). Positions 209, 234, and 238 each coordinate Zn(2+). Positions 266 to 270 (KMSKS) match the 'KMSKS' region motif. Lys269 lines the ATP pocket.

It belongs to the class-I aminoacyl-tRNA synthetase family. As to quaternary structure, monomer. It depends on Zn(2+) as a cofactor.

The protein localises to the cytoplasm. It carries out the reaction tRNA(Cys) + L-cysteine + ATP = L-cysteinyl-tRNA(Cys) + AMP + diphosphate. In Pseudomonas putida (strain GB-1), this protein is Cysteine--tRNA ligase.